We begin with the raw amino-acid sequence, 693 residues long: Elongation factor G (693 aa).

Positions 8 to 282 (EKTRNIGIMA…AVIDYLPSPL (275 aa)) constitute a tr-type G domain. GTP contacts are provided by residues 17–24 (AHVDAGKT), 81–85 (DTPGH), and 135–138 (NKMD).

Belongs to the TRAFAC class translation factor GTPase superfamily. Classic translation factor GTPase family. EF-G/EF-2 subfamily.

Its subcellular location is the cytoplasm. Catalyzes the GTP-dependent ribosomal translocation step during translation elongation. During this step, the ribosome changes from the pre-translocational (PRE) to the post-translocational (POST) state as the newly formed A-site-bound peptidyl-tRNA and P-site-bound deacylated tRNA move to the P and E sites, respectively. Catalyzes the coordinated movement of the two tRNA molecules, the mRNA and conformational changes in the ribosome. This Streptococcus gordonii (strain Challis / ATCC 35105 / BCRC 15272 / CH1 / DL1 / V288) protein is Elongation factor G.